Here is a 1189-residue protein sequence, read N- to C-terminus: Origin recognition complex subunit 1 (1189 aa).

The interval 1–53 (MTPKKKIFQNFQANDNEILSPTKKGIKLNVSKLNILNFENTIITKEKTNYEYK) is required for peripherial nuclear localization. The residue at position 2 (Thr2) is a Phosphothreonine. Residue Ser20 is modified to Phosphoserine. Leucine heptad repeat repeat units follow at residues 137 to 143 (LTNISSS), 144 to 150 (LTNISSS), 151 to 157 (LTNISSS), and 158 to 164 (LSNSLDE). Over residues 239-248 (KKNISKKNTH) the composition is skewed to basic residues. Disordered regions lie at residues 239 to 421 (KKNI…DHTD) and 679 to 749 (DTQA…QSSL). Residues 254 to 279 (QNDKNKEKNKEKDKNIKKDRDKDIQT) show a composition bias toward basic and acidic residues. Residues 304–320 (NNDNVKNNLKNNINNNN) are compositionally biased toward low complexity. Residues 321 to 339 (TLKRSSQSVRIDSDLSSAH) are compositionally biased toward polar residues. Over residues 353–381 (HRNNNNNNNNNNKTTSNNHNKNNKINNNN) the composition is skewed to low complexity. A compositionally biased stretch (basic and acidic residues) spans 385–394 (NYKKQTDTKH). Positions 395 to 411 (TNNTQNNKYNKTKTTNT) are enriched in low complexity. The span at 695 to 709 (KAQTTTNVKANTHTK) shows a compositional bias: polar residues. Composition is skewed to basic and acidic residues over residues 710–724 (TLNDHNKSKTTKNKE) and 733–742 (DVKKKSDPHN). Residues Val780 and 815 to 823 (GMPGTGKTA) each bind ATP. Residues Asp903 and Glu904 each contribute to the Mg(2+) site. An ATP-binding site is contributed by Glu904. The short motif at 913-922 (QKVLFTLFDW) is the PIP-box element. Residues Asn937 and Arg1003 each coordinate ATP.

This sequence belongs to the ORC1 family. In terms of assembly, component of the origin recognition complex (ORC). Interacts (via PIP-box) with PCNA1; the interaction occurs during DNA replication in trophozoites. In terms of processing, in schizonts, may be phosphorylated by PK5; phosphorylation leads to ORC1 dissociation from the telomeres and var gene promoters, translocation to the cytoplasm, where it is degraded by the proteasome.

It is found in the nucleus. The protein resides in the chromosome. The protein localises to the telomere. It localises to the nucleolus. The catalysed reaction is ATP + H2O = ADP + phosphate + H(+). In terms of biological role, component of the origin recognition complex (ORC) that binds origins of replication and thus may regulate the initiation of DNA replication. DNA-binding may not be ATP-dependent. In a SIR2A/Sir2-dependent manner, binds to and silences telomers and subtelomeric repeat regions (TAREs). In a SIR2A/Sir2-dependent manner, binds to promoters of var genes localized next to TAREs resulting in their silencing. This Plasmodium falciparum (isolate 3D7) protein is Origin recognition complex subunit 1.